The following is a 295-amino-acid chain: Beta-chimaerin (295 aa).

The Phorbol-ester/DAG-type zinc-finger motif lies at 41 to 91 (THNFKVHTFRGPHWCEYCANFMWGLIAQGVRCSDCGLNVHKQCSKHVPNDC). The region spanning 104-295 (CDLTTLVKAH…ILIENEDVLF (192 aa)) is the Rho-GAP domain.

Found in cerebellum and testis.

The protein localises to the membrane. Its activity is regulated as follows. In the inactive state, the N terminus protrudes into the active site of the Rho-GAP domain, sterically blocking Rac binding. Phospholipid binding to the Phorbol-ester/DAG-type zinc-finger/C1 domain triggers the cooperative dissociation of these interactions, allowing the N-terminus to move out of the active site and thereby activating the enzyme. Functionally, GTPase-activating protein for p21-rac. The sequence is that of Beta-chimaerin (Chn2) from Rattus norvegicus (Rat).